Consider the following 437-residue polypeptide: Enolase 1 (437 aa).

Glutamine 164 contributes to the (2R)-2-phosphoglycerate binding site. Residue glutamate 206 is the Proton donor of the active site. Positions 244, 289, and 316 each coordinate Mg(2+). Positions 341, 370, 371, and 392 each coordinate (2R)-2-phosphoglycerate. The active-site Proton acceptor is lysine 341.

The protein belongs to the enolase family. Mg(2+) is required as a cofactor.

Its subcellular location is the cytoplasm. It is found in the secreted. The protein localises to the cell surface. The enzyme catalyses (2R)-2-phosphoglycerate = phosphoenolpyruvate + H2O. The protein operates within carbohydrate degradation; glycolysis; pyruvate from D-glyceraldehyde 3-phosphate: step 4/5. In terms of biological role, catalyzes the reversible conversion of 2-phosphoglycerate (2-PG) into phosphoenolpyruvate (PEP). It is essential for the degradation of carbohydrates via glycolysis. The protein is Enolase 1 of Desulfitobacterium hafniense (strain Y51).